The chain runs to 495 residues: Transmembrane protein 161A (495 aa).

Positions 1–28 are cleaved as a signal peptide; it reads MALMGVQLVVSLLAVSIMQRMAPHLSFA. The Extracellular portion of the chain corresponds to 29–99; sequence RWLLCNGSLL…VNVMDALVLR (71 aa). Asn34 is a glycosylation site (N-linked (GlcNAc...) asparagine). A helical transmembrane segment spans residues 100 to 120; that stretch reads FFVEYQWLIDFAVYATGIYLF. Topologically, residues 121–135 are cytoplasmic; it reads TEGYYSVVDASKEVN. Residues 136 to 156 traverse the membrane as a helical segment; the sequence is IASIWCVLTVLFCLRTLYLLM. At 157 to 167 the chain is on the extracellular side; the sequence is SHYFLSEEGGE. The helical transmembrane segment at 168-188 threads the bilayer; that stretch reads RSVCLAFGFLSLLIAMLVLVV. The Cytoplasmic portion of the chain corresponds to 189–227; it reads REDYLEFGLEPGFTSLFDNFEVFARKQGYEWSVPFTKLS. A helical transmembrane segment spans residues 228 to 248; sequence VKLGLAVICAFIGALLAFPGL. Over 249–265 the chain is Extracellular; that stretch reads RLAQTHLDAVQMNADRP. The chain crosses the membrane as a helical span at residues 266–286; that stretch reads MIQILLHMSFLSPLVIIVMWI. Residues 287-305 lie on the Cytoplasmic side of the membrane; that stretch reads KPIARDFLGNAPMGKTSVT. A helical transmembrane segment spans residues 306-326; it reads LLSSSAFSSVRLWTIVVLCVL. Residues 327 to 367 are Extracellular-facing; the sequence is RLLLTRYHLQAYLNLAQKWVEQMKKEAGRIAAIDIQRKVTR. Residues 368-388 traverse the membrane as a helical segment; the sequence is IFCYLTVVTLQYLIPILLVLF. Residues 389–465 lie on the Cytoplasmic side of the membrane; it reads STLALKSLGD…ALLTPIFFRG (77 aa). The chain crosses the membrane as a helical span at residues 466-486; sequence IFAFLTWWVAACQLISSLFGI. Residues 487 to 495 lie on the Extracellular side of the membrane; the sequence is YFHQYLMHN.

It belongs to the TMEM161 family.

It localises to the membrane. Its function is as follows. May play a role in protection against oxidative stress. The polypeptide is Transmembrane protein 161A (tmem161a) (Danio rerio (Zebrafish)).